Consider the following 404-residue polypeptide: Tryptophan synthase beta chain (404 aa).

An N6-(pyridoxal phosphate)lysine modification is found at Lys98.

The protein belongs to the TrpB family. As to quaternary structure, tetramer of two alpha and two beta chains. It depends on pyridoxal 5'-phosphate as a cofactor.

The catalysed reaction is (1S,2R)-1-C-(indol-3-yl)glycerol 3-phosphate + L-serine = D-glyceraldehyde 3-phosphate + L-tryptophan + H2O. It functions in the pathway amino-acid biosynthesis; L-tryptophan biosynthesis; L-tryptophan from chorismate: step 5/5. Functionally, the beta subunit is responsible for the synthesis of L-tryptophan from indole and L-serine. This chain is Tryptophan synthase beta chain, found in Rhodopseudomonas palustris (strain ATCC BAA-98 / CGA009).